The following is a 158-amino-acid chain: Transcription elongation factor GreA (158 aa).

Positions 45–72 (AEYHAAREQQSFIEGRIKQLEGELSHAE) form a coiled coil.

It belongs to the GreA/GreB family.

Functionally, necessary for efficient RNA polymerase transcription elongation past template-encoded arresting sites. The arresting sites in DNA have the property of trapping a certain fraction of elongating RNA polymerases that pass through, resulting in locked ternary complexes. Cleavage of the nascent transcript by cleavage factors such as GreA or GreB allows the resumption of elongation from the new 3'terminus. GreA releases sequences of 2 to 3 nucleotides. The polypeptide is Transcription elongation factor GreA (Xylella fastidiosa (strain M23)).